Consider the following 441-residue polypeptide: Protein arginine methyltransferase NDUFAF7, mitochondrial (441 aa).

The N-terminal 46 residues, 1-46 (MSVLLRSGLGPLCAVARAAIPFIWRGKYFSSGNEPAENPVTPMLRH), are a transit peptide targeting the mitochondrion.

Belongs to the NDUFAF7 family. Interacts with NDUFS2.

It localises to the mitochondrion. It catalyses the reaction L-arginyl-[protein] + 2 S-adenosyl-L-methionine = N(omega),N(omega)'-dimethyl-L-arginyl-[protein] + 2 S-adenosyl-L-homocysteine + 2 H(+). Functionally, arginine methyltransferase involved in the assembly or stability of mitochondrial NADH:ubiquinone oxidoreductase complex (complex I). Acts by mediating symmetric dimethylation of 'Arg-118' of NDUFS2 after it assembles into the complex I, stabilizing the early intermediate complex. The sequence is that of Protein arginine methyltransferase NDUFAF7, mitochondrial from Homo sapiens (Human).